A 355-amino-acid chain; its full sequence is Peptide chain release factor 1 (355 aa).

Gln-233 bears the N5-methylglutamine mark.

It belongs to the prokaryotic/mitochondrial release factor family. Post-translationally, methylated by PrmC. Methylation increases the termination efficiency of RF1.

It is found in the cytoplasm. Its function is as follows. Peptide chain release factor 1 directs the termination of translation in response to the peptide chain termination codons UAG and UAA. This Bacillus cereus (strain ATCC 14579 / DSM 31 / CCUG 7414 / JCM 2152 / NBRC 15305 / NCIMB 9373 / NCTC 2599 / NRRL B-3711) protein is Peptide chain release factor 1.